The sequence spans 161 residues: Regulator of ribonuclease activity A (161 aa).

The protein belongs to the RraA family. Homotrimer. Binds to both RNA-binding sites in the C-terminal region of Rne and to RhlB.

The protein resides in the cytoplasm. Its function is as follows. Globally modulates RNA abundance by binding to RNase E (Rne) and regulating its endonucleolytic activity. Can modulate Rne action in a substrate-dependent manner by altering the composition of the degradosome. Modulates RNA-binding and helicase activities of the degradosome. This is Regulator of ribonuclease activity A from Cronobacter sakazakii (strain ATCC BAA-894) (Enterobacter sakazakii).